The following is an 840-amino-acid chain: Protein translocase subunit SecA (840 aa).

Residues Gln85, 103–107 (GEGKT), and Asp492 contribute to the ATP site. The tract at residues 787–821 (QRERVAKETGASHGGDSQEIKKKPVKKEPKVGRND) is disordered. Basic and acidic residues predominate over residues 802 to 819 (DSQEIKKKPVKKEPKVGR). Zn(2+) contacts are provided by Cys823, Cys825, Cys834, and Cys835.

Belongs to the SecA family. In terms of assembly, monomer and homodimer. Part of the essential Sec protein translocation apparatus which comprises SecA, SecYEG and auxiliary proteins SecDF. Other proteins may also be involved. Zn(2+) serves as cofactor.

The protein localises to the cell membrane. Its subcellular location is the cytoplasm. The catalysed reaction is ATP + H2O + cellular proteinSide 1 = ADP + phosphate + cellular proteinSide 2.. Part of the Sec protein translocase complex. Interacts with the SecYEG preprotein conducting channel. Has a central role in coupling the hydrolysis of ATP to the transfer of proteins into and across the cell membrane, serving as an ATP-driven molecular motor driving the stepwise translocation of polypeptide chains across the membrane. This chain is Protein translocase subunit SecA, found in Clostridium perfringens (strain SM101 / Type A).